Consider the following 340-residue polypeptide: Fructose-1,6-bisphosphatase class 1 (340 aa).

Positions 107, 126, 128, and 129 each coordinate Mg(2+). Asn-215 is a binding site for substrate. Glu-287 is a binding site for Mg(2+).

It belongs to the FBPase class 1 family. Homotetramer. Mg(2+) is required as a cofactor.

It is found in the cytoplasm. The enzyme catalyses beta-D-fructose 1,6-bisphosphate + H2O = beta-D-fructose 6-phosphate + phosphate. Its pathway is carbohydrate biosynthesis; gluconeogenesis. The sequence is that of Fructose-1,6-bisphosphatase class 1 from Brucella canis (strain ATCC 23365 / NCTC 10854 / RM-666).